Consider the following 332-residue polypeptide: Cysteine and histidine-rich domain-containing protein 1 (332 aa).

Alanine 2 is modified (N-acetylalanine). Residues 2-77 are interaction with PPP5C; it reads ALLCYNRGCG…KPPEPVKPEV (76 aa). Residues cysteine 5, cysteine 10, cysteine 24, histidine 27, cysteine 42, and cysteine 43 each contribute to the Zn(2+) site. CHORD domains follow at residues 5–64 and 157–216; these read CYNR…KGRH and CKNG…TGKH. Threonine 47 is subject to Phosphothreonine. Serine 51 bears the Phosphoserine mark. Zn(2+) is bound by residues cysteine 59, histidine 64, cysteine 157, cysteine 162, cysteine 176, histidine 179, cysteine 194, cysteine 195, cysteine 211, and histidine 216. The segment at 62–82 is disordered; it reads GRHNSEKPPEPVKPEVKTTEK. The segment covering 64–82 has biased composition (basic and acidic residues); that stretch reads HNSEKPPEPVKPEVKTTEK. The segment at 65-316 is interaction with HSP90AA1 and HSP90AB1; sequence NSEKPPEPVK…AEPMQWASLE (252 aa). Residues 227–316 enclose the CS domain; the sequence is VVPCRHDWHQ…AEPMQWASLE (90 aa).

In terms of assembly, interacts with HSP90AA1, HSP90AB1, PPP5C, ROCK1 and ROCK2.

Functionally, regulates centrosome duplication, probably by inhibiting the kinase activity of ROCK2. Proposed to act as co-chaperone for HSP90. May play a role in the regulation of NOD1 via a HSP90 chaperone complex. In vitro, has intrinsic chaperone activity. This function may be achieved by inhibiting association of ROCK2 with NPM1. Plays a role in ensuring the localization of the tyrosine kinase receptor EGFR to the plasma membrane, and thus ensures the subsequent regulation of EGFR activity and EGF-induced actin cytoskeleton remodeling. Involved in stress response. Prevents tumorigenesis. The polypeptide is Cysteine and histidine-rich domain-containing protein 1 (CHORDC1) (Bos taurus (Bovine)).